The following is a 687-amino-acid chain: MGFAVESRSHVKDILGLINAFNEVKKITVDGTTPITVAHVAALARRHDVKVALEAEQCRARVETCSSWVQRKAEDGADIYGVTTGFGACSSRRTNRLSELQESLIRCLLAGVFTKGCAPSVDELPATATRSAMLLRLNSFTYGCSGIRWEVMEALEKLLNSNVSPKVPLRGSVSASGDLIPLAYIAGLLIGKPSVIARIGDDVEVPAPEALSRVGLRPFKLQAKEGLALVNGTSFATAVASTVMYDANVLLLLVETLCGMFCEVIFGREEFAHPLIHKVKPHPGQIESAELLEWLLRSSPFQELSREYYSIDKLKKPKQDRYALRSSPQWLAPLVQTIRDATTTVETEVNSANDNPIIDHANDRALHGANFQGSAVGFYMDYVRIAVAGLGKLLFAQFTELMIEYYSNGLPGNLSLGPDLSVDYGLKGLDIAMAAYSSELQYLANPVTTHVHSAEQHNQDINSLALISARKTEEALDILKLMIASHLTAMCQAVDLRQLEEALVKVVENVVSTLADECGLPNDTKARLLYVAKAVPVYTYLESPCDPTLPLLLGLKQSCFDTILALHKKDGIETDTLVDRLAEFEKRLSDRLENEMTAVRVLYEKKGHKTADNNDALVRIQGSKFLPFYRFVREELDTGVMSARREQTPQEDVQKVFDAIADGRITVPLLHCLQGFLGQPNGCANGV.

Catalysis depends on Tyr-80, which acts as the Proton donor/acceptor. Positions 175–177 (ASG) form a cross-link, 5-imidazolinone (Ala-Gly). Residue Ser-176 is modified to 2,3-didehydroalanine (Ser). Positions 231, 319, 325, 355, 427, 455, and 458 each coordinate (E)-cinnamate.

It belongs to the PAL/histidase family. Homodimer. Homotetramer, dimer of dimers. Contains an active site 4-methylidene-imidazol-5-one (MIO), which is formed autocatalytically by cyclization and dehydration of residues Ala-Ser-Gly.

It is found in the cytoplasm. The catalysed reaction is L-phenylalanine = L-beta-phenylalanine. It catalyses the reaction L-phenylalanine = (E)-cinnamate + NH4(+). It functions in the pathway alkaloid biosynthesis; taxol biosynthesis. Its pathway is phenylpropanoid metabolism; trans-cinnamate biosynthesis; trans-cinnamate from L-phenylalanine: step 1/1. In terms of biological role, phenylalanine aminomutase that catalyzes the rearrangement of L-phenylalanine to R-beta-phenylalanine. Catalyzes the first committed step in the biosynthesis of the side chain of the alkaloid taxol (paclitaxel), a widely-used compound with antitumor activity. Also has low phenylalanine ammonia-lyase activity and can catalyze the amination of trans-cinnamate. This chain is Phenylalanine aminomutase (L-beta-phenylalanine forming) (pam), found in Taxus chinensis (Chinese yew).